We begin with the raw amino-acid sequence, 181 residues long: Epidermin decarboxylase (181 aa).

Residue H67 is part of the active site.

It belongs to the HFCD (homooligomeric flavin containing Cys decarboxylase) superfamily. In terms of assembly, homododecamer. The cofactor is FMN.

In terms of biological role, catalyzes the removal of two reducing equivalents (oxidative decarboxylation) from the cysteine residue of the C-terminal meso-lanthionine of epidermin to form a --C==C-- double bond. This Staphylococcus epidermidis protein is Epidermin decarboxylase (epiD).